The following is a 436-amino-acid chain: Alpha-2 adrenergic receptor (436 aa).

Residues 1–27 (MDVTQSNATKDDANITVTPWPYTETAA) lie on the Extracellular side of the membrane. N-linked (GlcNAc...) asparagine glycosylation is found at Asn-7 and Asn-14. The chain crosses the membrane as a helical span at residues 28–52 (AFIILVVSVIILVSIVGNVLVIVAV). The Cytoplasmic segment spans residues 53 to 64 (LTSRALRAPQNL). A helical transmembrane segment spans residues 65–90 (FLVSLACADILVATLVIPFSLANEIM). The Extracellular portion of the chain corresponds to 91 to 100 (GYWFFGSTWC). An intrachain disulfide couples Cys-100 to Cys-173. The chain crosses the membrane as a helical span at residues 101-123 (AFYLALDVLFCTSSIVHLCAISL). Residues 124-144 (DRYWSVTKAVSYNLKRTPKRI) are Cytoplasmic-facing. Residues 145-167 (KSMIAVVWVISAVISFPPLIMTK) traverse the membrane as a helical segment. Residues 168–178 (HDEKECLINDE) are Extracellular-facing. A helical membrane pass occupies residues 179–202 (TWYILSSSLVSFFAPGFIMITVYC). Over 203–329 (KIYRVAKQRS…QMREKRFTFV (127 aa)) the chain is Cytoplasmic. A disordered region spans residues 238–280 (KFEKESPSSNSSESNQRQEELDDIDLEESATSDNKPKSSRFSN). The span at 257–267 (ELDDIDLEESA) shows a compositional bias: acidic residues. A helical transmembrane segment spans residues 330–353 (LTVVMGVFVLCWFPFFFTYSLHAI). Over 354–366 (CGDSCEPPEALFK) the chain is Extracellular. A helical membrane pass occupies residues 367 to 387 (LFFWIGYCNSSVNPIIYTIFN). The Cytoplasmic portion of the chain corresponds to 388-436 (RDFRKAFKKICLLDCAAHLRDSCLGTLGRLNAKCIFECHQKSNQEETAN).

This sequence belongs to the G-protein coupled receptor 1 family.

It is found in the cell membrane. Functionally, alpha-2 adrenergic receptors mediate the catecholamine-induced inhibition of adenylate cyclase through the action of G proteins. The sequence is that of Alpha-2 adrenergic receptor from Carassius auratus (Goldfish).